The chain runs to 146 residues: Small ribosomal subunit protein uS5 (146 aa).

The region spanning 8–71 (FSEVVVNIGR…DDAFKNIIKV (64 aa)) is the S5 DRBM domain.

Belongs to the universal ribosomal protein uS5 family. As to quaternary structure, part of the 30S ribosomal subunit. Contacts proteins S4 and S8.

In terms of biological role, with S4 and S12 plays an important role in translational accuracy. Located at the back of the 30S subunit body where it stabilizes the conformation of the head with respect to the body. The sequence is that of Small ribosomal subunit protein uS5 from Helicobacter hepaticus (strain ATCC 51449 / 3B1).